The following is a 230-amino-acid chain: Demethylmenaquinone methyltransferase (230 aa).

S-adenosyl-L-methionine-binding positions include threonine 57, aspartate 77, and 101-102; that span reads DI.

Belongs to the class I-like SAM-binding methyltransferase superfamily. MenG/UbiE family.

It carries out the reaction a 2-demethylmenaquinol + S-adenosyl-L-methionine = a menaquinol + S-adenosyl-L-homocysteine + H(+). Its pathway is quinol/quinone metabolism; menaquinone biosynthesis; menaquinol from 1,4-dihydroxy-2-naphthoate: step 2/2. Functionally, methyltransferase required for the conversion of demethylmenaquinol (DMKH2) to menaquinol (MKH2). This chain is Demethylmenaquinone methyltransferase, found in Chlamydia pneumoniae (Chlamydophila pneumoniae).